Consider the following 277-residue polypeptide: S-formylglutathione hydrolase FrmB (277 aa).

Active-site charge relay system residues include serine 145, aspartate 221, and histidine 254.

Belongs to the esterase D family.

The catalysed reaction is S-formylglutathione + H2O = formate + glutathione + H(+). Serine hydrolase involved in the detoxification of formaldehyde. Hydrolyzes S-formylglutathione to glutathione and formate. The sequence is that of S-formylglutathione hydrolase FrmB (frmB) from Escherichia coli (strain SMS-3-5 / SECEC).